The chain runs to 372 residues: 4-hydroxy-3-methylbut-2-en-1-yl diphosphate synthase (flavodoxin) (372 aa).

Cys-270, Cys-273, Cys-305, and Glu-312 together coordinate [4Fe-4S] cluster.

This sequence belongs to the IspG family. It depends on [4Fe-4S] cluster as a cofactor.

The enzyme catalyses (2E)-4-hydroxy-3-methylbut-2-enyl diphosphate + oxidized [flavodoxin] + H2O + 2 H(+) = 2-C-methyl-D-erythritol 2,4-cyclic diphosphate + reduced [flavodoxin]. It participates in isoprenoid biosynthesis; isopentenyl diphosphate biosynthesis via DXP pathway; isopentenyl diphosphate from 1-deoxy-D-xylulose 5-phosphate: step 5/6. Converts 2C-methyl-D-erythritol 2,4-cyclodiphosphate (ME-2,4cPP) into 1-hydroxy-2-methyl-2-(E)-butenyl 4-diphosphate. In Enterobacter sp. (strain 638), this protein is 4-hydroxy-3-methylbut-2-en-1-yl diphosphate synthase (flavodoxin).